We begin with the raw amino-acid sequence, 126 residues long: MTVLLEHPLGPDSSRILCLALGKNMASKASCTSLSFLLCMATCSKQLGLNFSYHCSPPSSLILGRILDVSCLERKSFSVLLALRTGEVGLDELHFVICEPNELRLYCNKGRLFKFVLSISFRQEQT.

This is an uncharacterized protein from Saccharomyces cerevisiae (strain ATCC 204508 / S288c) (Baker's yeast).